A 31-amino-acid polypeptide reads, in one-letter code: Diuretic hormone class 2 (31 aa).

Residue Pro31 is modified to Proline amide.

Belongs to the diuretic hormone class 2 family.

It is found in the secreted. Regulation of fluid secretion. Stimulates primary urine secretion by Malpighian tubules and causes a dose-dependent stimulation of cAMP levels in the tubules. Has a nonselective effect on Na(+)/K(+) ion transport. In vitro, primarily elevates intracellular Ca(2+). This Apis mellifera (Honeybee) protein is Diuretic hormone class 2.